We begin with the raw amino-acid sequence, 178 residues long: Large ribosomal subunit protein uL5 (178 aa).

This sequence belongs to the universal ribosomal protein uL5 family. In terms of assembly, part of the 50S ribosomal subunit; part of the 5S rRNA/L5/L18/L25 subcomplex. Contacts the 5S rRNA and the P site tRNA. Forms a bridge to the 30S subunit in the 70S ribosome.

Functionally, this is one of the proteins that bind and probably mediate the attachment of the 5S RNA into the large ribosomal subunit, where it forms part of the central protuberance. In the 70S ribosome it contacts protein S13 of the 30S subunit (bridge B1b), connecting the 2 subunits; this bridge is implicated in subunit movement. Contacts the P site tRNA; the 5S rRNA and some of its associated proteins might help stabilize positioning of ribosome-bound tRNAs. This Wigglesworthia glossinidia brevipalpis protein is Large ribosomal subunit protein uL5.